The following is a 245-amino-acid chain: Ribonuclease PH (245 aa).

Residues Arg86 and 124-126 each bind phosphate; that span reads GTR.

It belongs to the RNase PH family. As to quaternary structure, homohexameric ring arranged as a trimer of dimers.

It carries out the reaction tRNA(n+1) + phosphate = tRNA(n) + a ribonucleoside 5'-diphosphate. Its function is as follows. Phosphorolytic 3'-5' exoribonuclease that plays an important role in tRNA 3'-end maturation. Removes nucleotide residues following the 3'-CCA terminus of tRNAs; can also add nucleotides to the ends of RNA molecules by using nucleoside diphosphates as substrates, but this may not be physiologically important. Probably plays a role in initiation of 16S rRNA degradation (leading to ribosome degradation) during starvation. This chain is Ribonuclease PH, found in Bacillus mycoides (strain KBAB4) (Bacillus weihenstephanensis).